A 396-amino-acid polypeptide reads, in one-letter code: Mannonate dehydratase (396 aa).

It belongs to the mannonate dehydratase family. It depends on Fe(2+) as a cofactor. Requires Mn(2+) as cofactor.

The enzyme catalyses D-mannonate = 2-dehydro-3-deoxy-D-gluconate + H2O. Its pathway is carbohydrate metabolism; pentose and glucuronate interconversion. Its function is as follows. Catalyzes the dehydration of D-mannonate. The protein is Mannonate dehydratase of Serratia proteamaculans (strain 568).